A 315-amino-acid chain; its full sequence is Archaeosortase A (315 aa).

A run of 7 helical transmembrane segments spans residues 12–32 (VIPY…AGVA), 47–67 (AGAW…FAFV), 74–94 (TVLI…VFAG), 173–193 (VVFE…IAAV), 204–224 (IALS…FIAL), 227–247 (GYQW…FGLT), and 260–280 (VLAQ…IARW). Cys-177 acts as the Acyl-thioester intermediate in catalysis. The active-site Proton donor is the Arg-218.

This sequence belongs to the exosortase/archaeosortase family. Archaeosortase A subfamily.

It localises to the cell membrane. Its function is as follows. Transpeptidase that recognizes and modifies its substrate by proteolytic cleavage of a sorting signal. Following cleavage, a covalent intermediate is formed via a thioester bond between the archaeosortase and its substrate, which is then transferred and covalently attached to the cell membrane. The chain is Archaeosortase A from Natronomonas pharaonis (strain ATCC 35678 / DSM 2160 / CIP 103997 / JCM 8858 / NBRC 14720 / NCIMB 2260 / Gabara) (Halobacterium pharaonis).